Reading from the N-terminus, the 426-residue chain is Serine hydroxymethyltransferase (426 aa).

(6S)-5,6,7,8-tetrahydrofolate-binding positions include L113 and 117-119 (GHL). The residue at position 222 (K222) is an N6-(pyridoxal phosphate)lysine. 363–365 (SAF) serves as a coordination point for (6S)-5,6,7,8-tetrahydrofolate.

This sequence belongs to the SHMT family. Homodimer. It depends on pyridoxal 5'-phosphate as a cofactor.

It localises to the cytoplasm. The catalysed reaction is (6R)-5,10-methylene-5,6,7,8-tetrahydrofolate + glycine + H2O = (6S)-5,6,7,8-tetrahydrofolate + L-serine. It participates in one-carbon metabolism; tetrahydrofolate interconversion. The protein operates within amino-acid biosynthesis; glycine biosynthesis; glycine from L-serine: step 1/1. In terms of biological role, catalyzes the reversible interconversion of serine and glycine with tetrahydrofolate (THF) serving as the one-carbon carrier. This reaction serves as the major source of one-carbon groups required for the biosynthesis of purines, thymidylate, methionine, and other important biomolecules. Also exhibits THF-independent aldolase activity toward beta-hydroxyamino acids, producing glycine and aldehydes, via a retro-aldol mechanism. The protein is Serine hydroxymethyltransferase of Porphyromonas gingivalis (strain ATCC 33277 / DSM 20709 / CIP 103683 / JCM 12257 / NCTC 11834 / 2561).